A 98-amino-acid chain; its full sequence is NADH-ubiquinone oxidoreductase chain 4L (98 aa).

Helical transmembrane passes span 1 to 21 (MTPV…GLAF), 29 to 49 (ALLC…LWAL), and 58 to 78 (VAPM…LALL).

The protein belongs to the complex I subunit 4L family.

The protein localises to the mitochondrion membrane. The enzyme catalyses a ubiquinone + NADH + 5 H(+)(in) = a ubiquinol + NAD(+) + 4 H(+)(out). Its function is as follows. Core subunit of the mitochondrial membrane respiratory chain NADH dehydrogenase (Complex I) which catalyzes electron transfer from NADH through the respiratory chain, using ubiquinone as an electron acceptor. Part of the enzyme membrane arm which is embedded in the lipid bilayer and involved in proton translocation. This is NADH-ubiquinone oxidoreductase chain 4L (MT-ND4L) from Salmo salar (Atlantic salmon).